The primary structure comprises 204 residues: Large ribosomal subunit protein eL15 (204 aa).

The protein belongs to the eukaryotic ribosomal protein eL15 family.

This Anopheles gambiae (African malaria mosquito) protein is Large ribosomal subunit protein eL15 (RpL15).